The following is a 67-amino-acid chain: Large ribosomal subunit protein uL29 (67 aa).

It belongs to the universal ribosomal protein uL29 family.

In Clostridium acetobutylicum (strain ATCC 824 / DSM 792 / JCM 1419 / IAM 19013 / LMG 5710 / NBRC 13948 / NRRL B-527 / VKM B-1787 / 2291 / W), this protein is Large ribosomal subunit protein uL29.